We begin with the raw amino-acid sequence, 417 residues long: MIDLKFLRENPDAVRASQRSRGEDPALVDALLDADAARRAAVSAADNLRAEQKAASKKVGKASPEERPALLTQAKELAEQVKAAEAAQADADRTFTAAHMAISNVVIEGVPAGGEDCFAVLDVVGEPRAIDDPKDHLELGEALGLIDMERGAKVAGSRFYFLTGRGALLQLGLMQLAVRLATDNGFTLVIPPVLVRPEVMAGTGFLGAHADEVYRLESDDMYLVGTSEVPLAGYHADEIIDLSAGPRRYAGWSSCFRREAGSYGKDTRGIIRVHQFDKVEGFIYCKPEDAAAEHDRLLGWQREMLALIEVPYRVIDVAAGDLGSSAARKYDCEAWVPTQQTYRELTSTSNCTTFQARRLSTRYRDENGKPQIAATLNGTLATTRWLVAILENHQQPDGSVRVPAALVPFVGTEVLEP.

Residue 226–228 (TSE) coordinates L-serine. Residues 257 to 259 (RRE) and Val-273 each bind ATP. Glu-280 lines the L-serine pocket. ATP is bound at residue 344-347 (ELTS). Thr-379 provides a ligand contact to L-serine.

This sequence belongs to the class-II aminoacyl-tRNA synthetase family. Type-1 seryl-tRNA synthetase subfamily. Homodimer. The tRNA molecule binds across the dimer.

It localises to the cytoplasm. It catalyses the reaction tRNA(Ser) + L-serine + ATP = L-seryl-tRNA(Ser) + AMP + diphosphate + H(+). The catalysed reaction is tRNA(Sec) + L-serine + ATP = L-seryl-tRNA(Sec) + AMP + diphosphate + H(+). The protein operates within aminoacyl-tRNA biosynthesis; selenocysteinyl-tRNA(Sec) biosynthesis; L-seryl-tRNA(Sec) from L-serine and tRNA(Sec): step 1/1. Functionally, catalyzes the attachment of serine to tRNA(Ser). Is also able to aminoacylate tRNA(Sec) with serine, to form the misacylated tRNA L-seryl-tRNA(Sec), which will be further converted into selenocysteinyl-tRNA(Sec). This Mycobacterium sp. (strain KMS) protein is Serine--tRNA ligase.